The sequence spans 651 residues: Intraflagellar transport protein 70A (651 aa).

TPR repeat units lie at residues 8 to 41, 42 to 75, 140 to 173, 175 to 207, 372 to 405, 410 to 443, and 445 to 478; these read DGEY…QYRS, RAGL…SPEV, PESE…MGYK, DLSF…GIRE, LTEQ…YDET, IPVL…CNEH, and IWKL…HYDN. A coiled-coil region spans residues 494–521; that stretch reads YIMTSQNEEAEELMRKIEKEEEQIAYEN. One copy of the TPR 8 repeat lies at 530–563; that stretch reads CIVNLVIGTLYCAKGNYEFGISRVIKSLEPYNKK.

The protein belongs to the TTC30/dfy-1/fleer family.

The protein localises to the cell projection. The protein resides in the cilium. In terms of biological role, required for polyglutamylation of axonemal tubulin. Plays a role in anterograde intraflagellar transport (IFT), the process by which cilia precursors are transported from the base of the cilium to the site of their incorporation at the tip. The chain is Intraflagellar transport protein 70A (ift70a) from Xenopus laevis (African clawed frog).